We begin with the raw amino-acid sequence, 376 residues long: Polycomb group protein FIE1 (376 aa).

WD repeat units follow at residues 85–127, 130–170, 176–216, 242–279, 291–332, and 339–376; these read DKDE…LLKT, GHGD…CILI, GHRN…PYVE, VHSN…QSPG, VPEC…PVLT, and QCKS…HPKA.

It belongs to the WD repeat ESC family. Interacts with EZ1. Component of the polycomb repressive complex 2 (PRC2), composed of the core PRC2 components EMF2B, EZ1 and CLF. PRC2 methylates 'Lys-27' residues of histone H3 (H3K27me3), leading to transcriptional repression of the affected target gene. In terms of tissue distribution, widely expressed.

In terms of biological role, polycomb group (PcG) protein. PcG proteins act by forming multiprotein complexes, which are required to maintain the transcriptionally repressive state of homeotic genes throughout development. PcG proteins are not required to initiate repression, but to maintain it during later stages of development. They act via the methylation of histones, rendering chromatin heritably changed in its expressibility. Involved in the regulation of seed endosperm development, grain filling and seed dormancy. FIE2-containing PcG complex in seed endosperm regulates the expression of various transcription factors by trimethylation on histone H3 'Lys-27' (H3K27me3) of target genes. Involved in the overall expression regulation of a large number of nutrient metabolism genes. Involved in the regulation of seed endosperm development. Involved in the regulation of vegetative development, particularly in stem cell maintenance in the root system, where it maintains the suppression of key differentiation regulators. This Oryza sativa subsp. japonica (Rice) protein is Polycomb group protein FIE1.